We begin with the raw amino-acid sequence, 78 residues long: Translational regulator CsrA (78 aa).

It belongs to the CsrA/RsmA family. As to quaternary structure, homodimer; the beta-strands of each monomer intercalate to form a hydrophobic core, while the alpha-helices form wings that extend away from the core.

It is found in the cytoplasm. A translational regulator that binds mRNA to regulate translation initiation and/or mRNA stability. Usually binds in the 5'-UTR at or near the Shine-Dalgarno sequence preventing ribosome-binding, thus repressing translation. Its main target seems to be the major flagellin gene, while its function is anatagonized by FliW. The chain is Translational regulator CsrA from Borrelia turicatae (strain 91E135).